The sequence spans 309 residues: Aspartate carbamoyltransferase catalytic subunit (309 aa).

Carbamoyl phosphate is bound by residues Arg-57 and Thr-58. Lys-86 is an L-aspartate binding site. Positions 107, 135, and 138 each coordinate carbamoyl phosphate. Arg-168 and Arg-228 together coordinate L-aspartate. The carbamoyl phosphate site is built by Leu-267 and Pro-268.

The protein belongs to the aspartate/ornithine carbamoyltransferase superfamily. ATCase family. Heterooligomer of catalytic and regulatory chains.

The catalysed reaction is carbamoyl phosphate + L-aspartate = N-carbamoyl-L-aspartate + phosphate + H(+). The protein operates within pyrimidine metabolism; UMP biosynthesis via de novo pathway; (S)-dihydroorotate from bicarbonate: step 2/3. Functionally, catalyzes the condensation of carbamoyl phosphate and aspartate to form carbamoyl aspartate and inorganic phosphate, the committed step in the de novo pyrimidine nucleotide biosynthesis pathway. This is Aspartate carbamoyltransferase catalytic subunit from Cenarchaeum symbiosum (strain A).